Reading from the N-terminus, the 385-residue chain is Leucine aminopeptidase 1 (385 aa).

An N-terminal signal peptide occupies residues 1-19 (MKFPSFLSLGIAASTTALA). The propeptide occupies 20–87 (ALPDQKPIGD…FPRAFAKTAV (68 aa)). A glycan (N-linked (GlcNAc...) asparagine) is linked at asparagine 177. Zn(2+)-binding residues include histidine 185 and aspartate 204. N-linked (GlcNAc...) asparagine glycosylation occurs at asparagine 229. Positions 243 and 270 each coordinate Zn(2+). Residues cysteine 319 and cysteine 323 are joined by a disulfide bond. Histidine 352 serves as a coordination point for Zn(2+).

Belongs to the peptidase M28 family. M28E subfamily. In terms of assembly, monomer. Zn(2+) is required as a cofactor.

Its subcellular location is the secreted. Functionally, extracellular aminopeptidase that allows assimilation of proteinaceous substrates. The polypeptide is Leucine aminopeptidase 1 (LAP1) (Ajellomyces dermatitidis (strain ER-3 / ATCC MYA-2586) (Blastomyces dermatitidis)).